A 357-amino-acid polypeptide reads, in one-letter code: U3 small nucleolar ribonucleoprotein protein LCP5 (357 aa).

The residue at position 2 (S2) is an N-acetylserine. 2 disordered regions span residues 146 to 211 (STLV…YKPP) and 301 to 357 (NKAE…QRRL). Over residues 155-166 (DDSEDDESSEDE) the composition is skewed to acidic residues. Positions 171–183 (PNTSGIINTNKKS) are enriched in polar residues. 2 stretches are compositionally biased toward basic and acidic residues: residues 187–196 (RVEETAKQEN) and 348–357 (SAWDRAQRRL).

It is found in the nucleus. The protein resides in the nucleolus. Component of the U3 small nucleolar ribonucleoprotein. Required for the early cleavages at sites A0, A1 and A2 of the pre-ribosomal RNA. Participates in ribosome biogenesis. The chain is U3 small nucleolar ribonucleoprotein protein LCP5 (LCP5) from Saccharomyces cerevisiae (strain ATCC 204508 / S288c) (Baker's yeast).